A 104-amino-acid polypeptide reads, in one-letter code: Large ribosomal subunit protein uL23 (104 aa).

This sequence belongs to the universal ribosomal protein uL23 family. As to quaternary structure, part of the 50S ribosomal subunit. Contacts protein L29, and trigger factor when it is bound to the ribosome.

Functionally, one of the early assembly proteins it binds 23S rRNA. One of the proteins that surrounds the polypeptide exit tunnel on the outside of the ribosome. Forms the main docking site for trigger factor binding to the ribosome. The protein is Large ribosomal subunit protein uL23 of Paraburkholderia phytofirmans (strain DSM 17436 / LMG 22146 / PsJN) (Burkholderia phytofirmans).